The following is a 91-amino-acid chain: Probable Fe(2+)-trafficking protein (91 aa).

This sequence belongs to the Fe(2+)-trafficking protein family.

Could be a mediator in iron transactions between iron acquisition and iron-requiring processes, such as synthesis and/or repair of Fe-S clusters in biosynthetic enzymes. The protein is Probable Fe(2+)-trafficking protein of Thiobacillus denitrificans (strain ATCC 25259 / T1).